Here is a 209-residue protein sequence, read N- to C-terminus: Ribose 1,5-bisphosphate phosphokinase PhnN (209 aa).

Residue 27–34 participates in ATP binding; it reads GPSGGGKD.

It belongs to the ribose 1,5-bisphosphokinase family.

The enzyme catalyses alpha-D-ribose 1,5-bisphosphate + ATP = 5-phospho-alpha-D-ribose 1-diphosphate + ADP. Its pathway is metabolic intermediate biosynthesis; 5-phospho-alpha-D-ribose 1-diphosphate biosynthesis; 5-phospho-alpha-D-ribose 1-diphosphate from D-ribose 5-phosphate (route II): step 3/3. In terms of biological role, catalyzes the phosphorylation of ribose 1,5-bisphosphate to 5-phospho-D-ribosyl alpha-1-diphosphate (PRPP). This chain is Ribose 1,5-bisphosphate phosphokinase PhnN, found in Chelativorans sp. (strain BNC1).